Consider the following 715-residue polypeptide: ATP-binding cassette sub-family B member 10, mitochondrial (715 aa).

The transit peptide at 1–82 (MRAPSARALL…SSGARRCWVL (82 aa)) directs the protein to the mitochondrion. Residues 83–133 (AGPRAAHPLFARLQGAAATGVRDLGNDSQRRPAATGRSEVWKLLGLVRPER) lie on the Mitochondrial matrix side of the membrane. The helical transmembrane segment at 134-157 (GRLSAAVGFLAVSSVITMSAPFFL) threads the bilayer. Residues 136–422 (LSAAVGFLAV…LSSFYSELMK (287 aa)) form the ABC transmembrane type-1 domain. The Mitochondrial intermembrane portion of the chain corresponds to 158–178 (GRIIDVIYTNPSEGYGDSLTR). Residues 179 to 201 (LCAVLTCVFLCGAAANGIRVYLM) form a helical membrane-spanning segment. Over 202–252 (QSSGQSIVNRLRTSLFSSILRQEVAFFDKTRTGELINRLSSDTALLGRSVT) the chain is Mitochondrial matrix. An N6-acetyllysine modification is found at K230. A helical membrane pass occupies residues 253 to 275 (ENLSDGLRAGAQASVGVGMMFFV). The Mitochondrial intermembrane portion of the chain corresponds to 276–278 (SPS). Residues 279–298 (LATFVLSVVPPISVLAVIYG) form a helical membrane-spanning segment. Residues 299 to 357 (RYLRKLSKATQDSLAEATQLAEERIGNIRTIRAFGKEMTEVEKYTGRVDQLLQLAQKEA) lie on the Mitochondrial matrix side of the membrane. A helical membrane pass occupies residues 358 to 381 (LARAGFFGAAGLSGNLIVLSVLYK). Topologically, residues 382 to 395 (GGLLMGSAHMTVGE) are mitochondrial intermembrane. The chain crosses the membrane as a helical span at residues 396–417 (LSSFLMYAFWVGLSIGGLSSFY). At 418–715 (SELMKGLGAG…AEQFLEPARA (298 aa)) the chain is on the mitochondrial matrix side. Positions 457–696 (LEFRNVHFTY…PNGLYRKLMN (240 aa)) constitute an ABC transporter domain. The ATP site is built by G495, G497, K498, S499, and T500. A Mg(2+)-binding site is contributed by S499. Residue C547 is modified to S-glutathionyl cysteine. D623 contributes to the Mg(2+) binding site.

Belongs to the ABC transporter superfamily. ABCB family. Mitochondrial peptide exporter (TC 3.A.1.212) subfamily. As to quaternary structure, homodimer or homooligomer. Interacts with PAAT; this interaction regulates ABCB10. Interacts with SLC25A37; this interaction stabilizes SLC25A37 and enhances the function of SLC25A37 to import mitochondrial iron during erythroid differentiation. Interacts with FECH; this interaction may allow the formation of the oligomeric complex with SLC25A37. Forms a complex with ABCB7 and FECH, where a dimeric FECH bridges ABCB7 and ABCB10 homodimers; this complex may be required for cellular iron homeostasis, mitochondrial function and heme biosynthesis. In terms of tissue distribution, expressed at particularly high levels in fetal liver, and erythroid tissues of embryos and adults. Found also in adult bone marrow, liver and kidney, and at lower levels in heart, brain and spleen.

Its subcellular location is the mitochondrion inner membrane. The catalysed reaction is biliverdin IXalpha(in) + ATP + H2O = biliverdin IXalpha(out) + ADP + phosphate + H(+). Oxidized glutathione (GSSG) stimulates ATP hydrolysis without affecting ATP binding, whereas reduced glutathione (GSH) inhibits ATP binding and hydrolysis. In terms of biological role, ATP-dependent transporter located in the mitochondrial inner membrane that catalyzes the export of biliverdin from the mitochondrial matrix, and plays a crucial role in hemoglobin synthesis and antioxidative stress. Participates in the early step of the heme biosynthetic process during insertion of iron into protoporphyrin IX (PPIX). Involved in the stabilization of the iron transporter mitoferrin-1/SLC25A37. In addition may be involved in mitochondrial unfolded protein response (UPRmt) signaling pathway, although ABCB10 probably does not participate in peptide export from mitochondria. The protein is ATP-binding cassette sub-family B member 10, mitochondrial of Mus musculus (Mouse).